The primary structure comprises 90 residues: Small ribosomal subunit protein bS20 (90 aa).

It belongs to the bacterial ribosomal protein bS20 family.

Its function is as follows. Binds directly to 16S ribosomal RNA. In Desulfitobacterium hafniense (strain DSM 10664 / DCB-2), this protein is Small ribosomal subunit protein bS20.